The sequence spans 257 residues: 1-(5-phosphoribosyl)-5-[(5-phosphoribosylamino)methylideneamino] imidazole-4-carboxamide isomerase (257 aa).

D8 acts as the Proton acceptor in catalysis. Catalysis depends on D129, which acts as the Proton donor.

This sequence belongs to the HisA/HisF family.

It is found in the cytoplasm. It carries out the reaction 1-(5-phospho-beta-D-ribosyl)-5-[(5-phospho-beta-D-ribosylamino)methylideneamino]imidazole-4-carboxamide = 5-[(5-phospho-1-deoxy-D-ribulos-1-ylimino)methylamino]-1-(5-phospho-beta-D-ribosyl)imidazole-4-carboxamide. Its pathway is amino-acid biosynthesis; L-histidine biosynthesis; L-histidine from 5-phospho-alpha-D-ribose 1-diphosphate: step 4/9. This Crocosphaera subtropica (strain ATCC 51142 / BH68) (Cyanothece sp. (strain ATCC 51142)) protein is 1-(5-phosphoribosyl)-5-[(5-phosphoribosylamino)methylideneamino] imidazole-4-carboxamide isomerase.